The chain runs to 75 residues: UPF0352 protein CKO_00587 (75 aa).

This sequence belongs to the UPF0352 family.

In Citrobacter koseri (strain ATCC BAA-895 / CDC 4225-83 / SGSC4696), this protein is UPF0352 protein CKO_00587.